The chain runs to 278 residues: NAD-dependent protein deacylase (278 aa).

One can recognise a Deacetylase sirtuin-type domain in the interval 22–270 (RSRIFHRDSA…PEYIREFLTT (249 aa)). 46–65 (GAGISAESGIRTFRADDGLW) lines the NAD(+) pocket. The substrate site is built by tyrosine 90 and arginine 93. Position 127–130 (127–130 (QNID)) interacts with NAD(+). The active-site Proton acceptor is the histidine 145. Zn(2+) is bound by residues cysteine 153 and cysteine 172. NAD(+)-binding positions include 212–214 (GTS), 238–240 (NLE), and alanine 256.

This sequence belongs to the sirtuin family. Class III subfamily. Zn(2+) is required as a cofactor.

It is found in the cytoplasm. The catalysed reaction is N(6)-acetyl-L-lysyl-[protein] + NAD(+) + H2O = 2''-O-acetyl-ADP-D-ribose + nicotinamide + L-lysyl-[protein]. It carries out the reaction N(6)-succinyl-L-lysyl-[protein] + NAD(+) + H2O = 2''-O-succinyl-ADP-D-ribose + nicotinamide + L-lysyl-[protein]. It catalyses the reaction N(6)-(2-hydroxyisobutanoyl)-L-lysyl-[protein] + NAD(+) + H2O = 2''-O-(2-hydroxyisobutanoyl)-ADP-D-ribose + nicotinamide + L-lysyl-[protein]. Its function is as follows. NAD-dependent lysine deacetylase that specifically removes acetyl groups on target proteins. Also acts as a protein-lysine deacylase by mediating protein desuccinylation and de-2-hydroxyisobutyrylation. Modulates the activities of several proteins which are inactive in their acylated form. This chain is NAD-dependent protein deacylase, found in Yersinia pestis.